Here is a 314-residue protein sequence, read N- to C-terminus: Porphobilinogen deaminase (314 aa).

S-(dipyrrolylmethanemethyl)cysteine is present on Cys-234.

It belongs to the HMBS family. Monomer. Requires dipyrromethane as cofactor.

The catalysed reaction is 4 porphobilinogen + H2O = hydroxymethylbilane + 4 NH4(+). Its pathway is porphyrin-containing compound metabolism; protoporphyrin-IX biosynthesis; coproporphyrinogen-III from 5-aminolevulinate: step 2/4. Tetrapolymerization of the monopyrrole PBG into the hydroxymethylbilane pre-uroporphyrinogen in several discrete steps. This is Porphobilinogen deaminase from Mycobacterium ulcerans (strain Agy99).